The chain runs to 965 residues: Phosphatidylethanolamine N-methyltransferase (965 aa).

The Lumenal segment spans residues 1 to 82 (MDRGLSTGTN…SPSEPKNLSD (82 aa)). Residues 34 to 54 (PTVTNASNGKDKAGKTFGRTP) form a disordered region. A helical membrane pass occupies residues 83-103 (LVVLTILAGHIFLLWILPSGA). Residues 104–106 (KIP) are Cytoplasmic-facing. Residues 107 to 127 (VFAVIYLFWRSCYNAGIGWLL) traverse the membrane as a helical segment. The Lumenal portion of the chain corresponds to 128 to 192 (HNQSHHKTLV…EYNTWLVFRR (65 aa)). A helical transmembrane segment spans residues 193–213 (LVDLILMCDFASYCLFAIACS). Residues 214-220 (RHPANES) lie on the Cytoplasmic side of the membrane. The helical transmembrane segment at 221–241 (VLMTVIRWTSGIALVLFNLWV) threads the bilayer. Residues 242-274 (KLDAHRVVKDYAWYWGDFFYLIDQELTFDGVFE) are Lumenal-facing. Residues 275–295 (MAPHPMYSVGYAGYYGISLMA) form a helical membrane-spanning segment. Topologically, residues 296-297 (AS) are cytoplasmic. A helical transmembrane segment spans residues 298 to 318 (YKVLFISIIAHAAQFAFLVLV). The Lumenal segment spans residues 319 to 394 (ENPHIDKTYN…LDLHRITDTS (76 aa)). The tract at residues 326–368 (TYNPPPPRKRTITEHDAASQRSQSPDTPNAPSVSEENVPNATT) is disordered. Residues 344-368 (SQRSQSPDTPNAPSVSEENVPNATT) are compositionally biased toward polar residues. A helical transmembrane segment spans residues 395 to 415 (SILVQFLMFSLTVLTPSTPWY). A topological domain (cytoplasmic) is located at residue Q416. A helical transmembrane segment spans residues 417-437 (FLFVANAAIWRLWYSVGIGYL). Over 438–470 (LNRQSNCKSWTRHFVKYGETPHEAWNQWKGTYH) the chain is Lumenal. Residues 471 to 491 (LSMVMCYASFISAVWKMYTLP) traverse the membrane as a helical segment. Over 492–503 (SNWGYGLAILRH) the chain is Cytoplasmic. A helical transmembrane segment spans residues 504–524 (VLGAGLISLQIWTSVSIYESL). At 525-559 (GEFGWFYGDFFFDESPKLTYNGIYRFLNNPERVLG) the chain is on the lumenal side. Residues 560-580 (LAGVWGAVLITASGTVAFLAF) form a helical membrane-spanning segment. Topologically, residues 581-965 (LSHILSLGFI…GATTPTESKE (385 aa)) are cytoplasmic.

Belongs to the class VI-like SAM-binding methyltransferase superfamily. CHO2 family.

The protein localises to the endoplasmic reticulum membrane. It catalyses the reaction a 1,2-diacyl-sn-glycero-3-phosphoethanolamine + S-adenosyl-L-methionine = a 1,2-diacyl-sn-glycero-3-phospho-N-methylethanolamine + S-adenosyl-L-homocysteine + H(+). Its pathway is phospholipid metabolism; phosphatidylcholine biosynthesis. Functionally, catalyzes the first step of the methylation pathway of phosphatidylcholine biosynthesis, the SAM-dependent methylation of phosphatidylethanolamine (PE) to phosphatidylmonomethylethanolamine (PMME). This chain is Phosphatidylethanolamine N-methyltransferase, found in Emericella nidulans (strain FGSC A4 / ATCC 38163 / CBS 112.46 / NRRL 194 / M139) (Aspergillus nidulans).